We begin with the raw amino-acid sequence, 500 residues long: Dipeptide and tripeptide permease A (500 aa).

Residues 1-21 (MSTANQKPTESVSLNAFKQPK) lie on the Cytoplasmic side of the membrane. Residues 22–44 (AFYLIFSIELWERFGYYGLQGIM) form a helical membrane-spanning segment. The Periplasmic portion of the chain corresponds to 45 to 59 (AVYLVKQLGMSEADS). A helical membrane pass occupies residues 60 to 80 (ITLFSSFSALVYGLVAIGGWL). Residues 81-89 (GDKVLGTKR) are Cytoplasmic-facing. Residues 90–110 (VIMLGAIVLAIGYALVAWSGH) form a helical membrane-spanning segment. Residue Asp-111 is a topological domain, periplasmic. Residues 112 to 132 (AGIVYMGMAAIAVGNGLFKAN) form a helical membrane-spanning segment. At 133 to 153 (PSSLLSTCYEKNDPRLDGAFT) the chain is on the cytoplasmic side. Residues 154 to 174 (MYYMSVNIGSFFSMIATPWLA) traverse the membrane as a helical segment. Residues 175–178 (AKYG) lie on the Periplasmic side of the membrane. The chain crosses the membrane as a helical span at residues 179-199 (WSVAFALSVVGLLITIVNFAF). Over 200-219 (CQRWVKQYGSKPDFEPINYR) the chain is Cytoplasmic. Residues 220–240 (NLLLTIIGVVALIAIATWLLH) traverse the membrane as a helical segment. The Periplasmic segment spans residues 241–246 (NQEVAR). Residues 247–267 (MALGVVAFGIVVIFGKEAFAM) traverse the membrane as a helical segment. The Cytoplasmic segment spans residues 268 to 274 (KGAARRK). A helical transmembrane segment spans residues 275–295 (MIVAFILMLEAIIFFVLYSQM). At 296-320 (PTSLNFFAIRNVEHSILGLAVEPEQ) the chain is on the periplasmic side. The chain crosses the membrane as a helical span at residues 321 to 341 (YQALNPFWIIIGSPILAAIYN). Topologically, residues 342 to 352 (KMGDTLPMPTK) are cytoplasmic. Residues 353-373 (FAIGMVMCSGAFLILPLGAKF) traverse the membrane as a helical segment. Residues 374–378 (ASDAG) are Periplasmic-facing. A helical transmembrane segment spans residues 379-399 (IVSVSWLVASYGLQSIGELMI). Topologically, residues 400–414 (SGLGLAMVAQLVPQR) are cytoplasmic. A helical membrane pass occupies residues 415-435 (LMGFIMGSWFLTTAGANLIGG). Residues 436–459 (YVAGMMAVPDNVTDPLMSLEVYGR) lie on the Periplasmic side of the membrane. The helical transmembrane segment at 460 to 480 (VFLQIGVATAVIAVLMLLTAP) threads the bilayer. Topologically, residues 481–500 (KLHRMTQDDAADKAAKAAVA) are cytoplasmic.

It belongs to the major facilitator superfamily. Proton-dependent oligopeptide transporter (POT/PTR) (TC 2.A.17) family. DtpA subfamily. In terms of assembly, monomer. Has a crown-like structure with a diameter of 8 nm and a central density.

It is found in the cell inner membrane. Its function is as follows. Proton-dependent permease that transports di- and tripeptides as well as structurally related peptidomimetics such as aminocephalosporins into the cell. Has a clear preference for dipeptides and tripeptides composed of L-amino acids, and discriminates dipeptides on the basis of the position of charges within the substrate. The chain is Dipeptide and tripeptide permease A (dtpA) from Escherichia coli (strain K12).